We begin with the raw amino-acid sequence, 2332 residues long: Genome polyprotein (2332 aa).

A Peptidase C28 domain is found at 1–201; sequence MHTTDCFIAL…WKAMVQRKLK (201 aa). Over 1-1480 the chain is Cytoplasmic; it reads MHTTDCFIAL…SFVKRAFKRL (1480 aa). Catalysis depends on for leader protease activity residues C51, H148, and D163. Disordered regions lie at residues 199–218 and 238–265; these read KLKG…QSGN and QLGD…NTQN. G202 carries N-myristoyl glycine; by host lipidation. Composition is skewed to polar residues over residues 204-218 and 238-251; these read GQSS…QSGN and QLGD…SNEG. Positions 252–265 are enriched in low complexity; sequence STDTTSTHTTNTQN. The tract at residues 789 to 797 is antigenic epitope; the sequence is ALLRAATYY. Positions 868–870 match the Cell attachment site motif; it reads RGD. The region spanning 1189–1353 is the SF3 helicase domain; that stretch reads NVHIANLCKV…DGYKINNKLD (165 aa). 1217–1224 is a binding site for ATP; the sequence is GKSGQGKS. Residues 1481–1501 lie within the membrane without spanning it; that stretch reads KENFEIVALCLTLLANIVIMI. At 1502–2332 the chain is on the cytoplasmic side; that stretch reads RETRKRQKMV…RWVNAVCGDA (831 aa). Basic and acidic residues-rich tracts occupy residues 1529-1538 and 1549-1563; these read KTLDEAEKNP and FRER…RDDV. A disordered region spans residues 1529-1584; the sequence is KTLDEAEKNPLETSGASTVGFRERTLPGQKARDDVNSEPAQPAEEQPQAEGPYAGP. Low complexity predominate over residues 1566–1578; sequence EPAQPAEEQPQAE. Residues Y1581, Y1604, and Y1628 each carry the O-(5'-phospho-RNA)-tyrosine modification. The Peptidase C3 domain maps to 1652 to 1848; the sequence is APPTDLQKMV…YCSCVSRSML (197 aa). Catalysis depends on H1695, which acts as the For protease 3C activity; Proton donor/acceptor. Catalysis depends on for protease 3C activity residues D1733 and C1812. Positions 1878 to 1886 match the Nuclear localization signal motif; it reads MRKTKLAPT. The RdRp catalytic domain occupies 2096–2214; it reads RNVWDVDYSA…ASDYDLDFEA (119 aa). Catalysis depends on D2200, which acts as the For RdRp activity.

Belongs to the picornaviruses polyprotein family. In terms of assembly, interacts with host ISG15. Capsid protein VP1: Interacts (via R-G-D motif) with host ITGAV/ITGB6. Interacts (via R-G-D motif) with host ITGAV/ITGB6. Interacts with host MAVS; this interaction inhibits binding of host TRAF3 to MAVS, thereby suppressing interferon-mediated responses. As to quaternary structure, forms homooligomers. In terms of assembly, homohexamer. Interacts with host VIM. Interacts with host BECN1. Interacts with host DCTN3. As to quaternary structure, interacts with RNA-dependent RNA polymerase; this interaction allows 3B-1 to binds 2 polymerases and act as a primer. It also allows the recruitment of the RNA-dependent RNA polymerase to host membranes. In terms of assembly, interacts with RNA-dependent RNA polymerase; this interaction allows 3B-2 to act as a primer. Interacts with RNA-dependent RNA polymerase; this interaction allows 3B-3 to act as a primer. As to quaternary structure, interacts with 3B-1; this interaction allows 3B-1 to binds 2 polymerases and act as a primer. It also allows the recruitment of the RNA-dependent RNA polymerase to host membranes. Interacts with 3B-2; this interaction allows 3B-2 to act as a primer. Interacts with 3B-3; this interaction allows 3B-3 to act as a primer. Post-translationally, removes six residues from its own C-terminus, generating sLb(pro). Specific enzymatic cleavages in vivo by the viral proteases yield a variety of precursors and mature proteins. The polyprotein seems to be cotranslationally cleaved at the 2A/2B junction by a ribosomal skip from one codon to the next without formation of a peptide bond. This process would release the L-P1-2A peptide from the translational complex. In terms of processing, during virion maturation, immature virions are rendered infectious following cleavage of VP0 into VP4 and VP2. This maturation seems to be an autocatalytic event triggered by the presence of RNA in the capsid and is followed by a conformational change of the particle. Post-translationally, myristoylation is required during RNA encapsidation and formation of the mature virus particle. Uridylylated by the polymerase and covalently linked to the 5'-end of genomic RNA. These uridylylated forms act as a nucleotide-peptide primer for the polymerase.

The protein resides in the host nucleus. The protein localises to the host cytoplasm. It localises to the virion. Its subcellular location is the host endoplasmic reticulum membrane. It is found in the host cytoplasmic vesicle membrane. The catalysed reaction is Autocatalytically cleaves itself from the polyprotein of the foot-and-mouth disease virus by hydrolysis of a Lys-|-Gly bond, but then cleaves host cell initiation factor eIF-4G at bonds -Gly-|-Arg- and -Lys-|-Arg-.. The enzyme catalyses a ribonucleoside 5'-triphosphate + H2O = a ribonucleoside 5'-diphosphate + phosphate + H(+). It catalyses the reaction RNA(n) + a ribonucleoside 5'-triphosphate = RNA(n+1) + diphosphate. It carries out the reaction Selective cleavage of Gln-|-Gly bond in the poliovirus polyprotein. In other picornavirus reactions Glu may be substituted for Gln, and Ser or Thr for Gly.. Functionally, autocatalytically cleaves itself from the polyprotein at the L/VP0 junction. Also cleaves the host translation initiation factors EIF4G1 and EIF4G3, in order to shut off the capped cellular mRNA transcription. Plays a role in counteracting host innate antiviral response using diverse mechanisms. Possesses a deubiquitinase activity acting on both 'Lys-48' and 'Lys-63'-linked polyubiquitin chains. In turn, inhibits the ubiquitination and subsequent activation of key signaling molecules of type I IFN response such as host RIGI, TBK1, TRAF3 and TRAF6. Inhibits host NF-kappa-B activity by inducing a decrease in RELA mRNA levels. Cleaves a peptide bond in the C-terminus of host ISG15, resulting in the damaging of this modifier that can no longer be attached to target proteins. Also cleaves host G3BP1 and G3BP2 in order to inhibit cytoplasmic stress granules assembly. Lies on the inner surface of the capsid shell. After binding to the host receptor, the capsid undergoes conformational changes. Capsid protein VP4 is released, capsid protein VP1 N-terminus is externalized, and together, they shape a pore in the host membrane through which the viral genome is translocated into the host cell cytoplasm. After genome has been released, the channel shrinks. Its function is as follows. Forms an icosahedral capsid of pseudo T=3 symmetry with capsid proteins VP1 and VP3. The capsid is composed of 60 copies of each capsid protein organized in the form of twelve pentamers and encloses the viral positive strand RNA genome. Upon acidifcation in the endosome, dissociates into pentamers. In terms of biological role, forms an icosahedral capsid of pseudo T=3 symmetry with capsid proteins VP0 and VP3. The capsid is composed of 60 copies of each capsid protein organized in the form of twelve pentamers and encloses the viral positive strand RNA genome. Upon acidifcation in the endosome, dissociates into pentamers. Functionally, forms an icosahedral capsid of pseudo T=3 symmetry with capsid proteins VP2 and VP3. The capsid is composed of 60 copies of each capsid protein organized in the form of twelve pentamers and encloses the viral positive strand RNA genome. Mediates cell entry by attachment to an integrin receptor, usually host ITGAV/ITGB6. In addition, targets host MAVS to suppress type I IFN pathway. Upon acidifcation in the endosome, dissociates into pentamers. Mediates self-processing of the polyprotein by a translational effect termed 'ribosome skipping'. Mechanistically, 2A-mediated cleavage occurs between the C-terminal glycine and the proline of the downstream protein 2B. In the case of foot-and-mouth disease virus, the 2A oligopeptide is post-translationally 'trimmed' from the C-terminus of the upstream protein 1D by 3C proteinase. Its function is as follows. Plays an essential role in the virus replication cycle by acting as a viroporin. Creates a pore in the host endoplasmic reticulum and as a consequence releases Ca2+ in the cytoplasm of infected cell. In turn, high levels of cytoplasmic calcium may trigger membrane trafficking and transport of viral ER-associated proteins to viroplasms, sites of viral genome replication. In terms of biological role, associates with and induces structural rearrangements of intracellular membranes. Triggers host autophagy by interacting with host BECN1 and thereby promotes viral replication. Participates in viral replication and interacts with host DHX9. Displays RNA-binding, nucleotide binding and NTPase activities. May play a role in virion morphogenesis and viral RNA encapsidation by interacting with the capsid protein VP3. Functionally, plays important roles in virus replication, virulence and host range. Cooperates with host DDX56 to inhibit IRF3 nuclear translocation and subsequent type I interferon production. Covalently linked to the 5'-end of both the positive-strand and negative-strand genomic RNAs. Acts as a genome-linked replication primer. Its function is as follows. Cysteine protease that generates mature viral proteins from the precursor polyprotein. In addition to its proteolytic activity, binds to viral RNA and thus influences viral genome replication. RNA and substrate bind cooperatively to the protease. In terms of biological role, RNA-directed RNA polymerase 3D-POL replicates genomic and antigenomic RNA by recognizing replications specific signals. Covalently attaches UMP to a tyrosine of VPg, which is used to prime RNA synthesis. The positive stranded RNA genome is first replicated at virus induced membranous vesicles, creating a dsRNA genomic replication form. This dsRNA is then used as template to synthesize positive stranded RNA genomes. ss(+)RNA genomes are either translated, replicated or encapsidated. The protein is Genome polyprotein of Foot-and-mouth disease virus (isolate -/Germany/A5Westerwald/1951 serotype A) (FMDV).